We begin with the raw amino-acid sequence, 3101 residues long: Probable polyketide synthase 32 (3101 aa).

The Ketosynthase family 3 (KS3) domain occupies 27 to 465; sequence SGDVAVIGIG…GSNVCLILSE (439 aa). Catalysis depends on for beta-ketoacyl synthase activity residues Cys199, His338, and His388. The acyl/malonyl transferase stretch occupies residues 664 to 697; that stretch reads GVSADIIIGHSLGEVSSAYCSGMIDFETLCYLTY. Ser674 (for acyl/malonyl transferase activity) is an active-site residue. An N-terminal hotdog fold region spans residues 965–1087; that stretch reads GPSINNLGNN…GNFSLTKHNS (123 aa). Residues 965 to 1287 form the PKS/mFAS DH domain; that stretch reads GPSINNLGNN…CTLVSLPNPE (323 aa). Catalysis depends on His999, which acts as the Proton acceptor; for dehydratase activity. Positions 1104–1287 are C-terminal hotdog fold; that stretch reads NFTSISKQDL…CTLVSLPNPE (184 aa). Asp1176 serves as the catalytic Proton donor; for dehydratase activity. A disordered region spans residues 1209–1236; that stretch reads KNGNNNDDDEESNNNNNNNNNNNNNNNN. The span at 1221 to 1236 shows a compositional bias: low complexity; sequence NNNNNNNNNNNNNNNN. The 78-residue stretch at 2550 to 2627 folds into the Carrier domain; the sequence is DNNEIIRSTI…QSIEIIKSAN (78 aa). Ser2587 is modified (O-(pantetheine 4'-phosphoryl)serine). Residues 2627-2648 form a disordered region; it reads NNKNNKNNNNNNNNKTNKNNNN.

The cofactor is pantetheine 4'-phosphate.

In terms of biological role, probable polyketide synthase. This chain is Probable polyketide synthase 32 (pks32), found in Dictyostelium discoideum (Social amoeba).